A 129-amino-acid polypeptide reads, in one-letter code: Large ribosomal subunit protein uL22 (129 aa).

Belongs to the universal ribosomal protein uL22 family. As to quaternary structure, part of the 50S ribosomal subunit.

In terms of biological role, this protein binds specifically to 23S rRNA; its binding is stimulated by other ribosomal proteins, e.g. L4, L17, and L20. It is important during the early stages of 50S assembly. It makes multiple contacts with different domains of the 23S rRNA in the assembled 50S subunit and ribosome. The globular domain of the protein is located near the polypeptide exit tunnel on the outside of the subunit, while an extended beta-hairpin is found that lines the wall of the exit tunnel in the center of the 70S ribosome. This chain is Large ribosomal subunit protein uL22, found in Phytoplasma sp. (strain STRAWB2).